The sequence spans 785 residues: Probably inactive leucine-rich repeat receptor-like protein kinase At5g58150 (785 aa).

Positions 1 to 21 are cleaved as a signal peptide; the sequence is MRLSLWGSLLFFSFFVKHLTS. Over 22–436 the chain is Extracellular; sequence LDPNTDAYHL…KVNKKNTGLK (415 aa). LRR repeat units lie at residues 64–88, 89–112, 114–136, 138–160, 161–184, 186–208, 210–232, 236–258, 259–283, 284–306, 307–330, 331–355, 357–377, and 379–405; these read SENVLHISASGLDLSGSIPDNTIGK, MSKLQTLDLSGNKITSLPSDLWSL, LLESLNLSSNRISEPLPSNIGNF, SLHTLDLSFNSISGKIPAAISNL, VNLTTLKLHNNDFQFGVPPELVHC, SLLSIDLSSNRLNESLPVGFGSA, PLLKSLNLSRNLFQGSLIGVLHE, TVDLSENRFDGHILQLIPGHKHN, WSSLIHLDLSDNSFVGHIFNGLSSA, HKLGHLNLACNRFRAQEFPEIGK, LSALHYLNLSRTNLTNIIPREISR, LSHLKVLDLSSNNLTGHVPMLSVKN, EVLDLSLNKLDGDIPRPLLEK, and AMMQRFNFSFNNLTFCNPNFSQETIQR. Asparagine 119 carries an N-linked (GlcNAc...) asparagine glycan. Residues asparagine 162, asparagine 198, asparagine 216, and asparagine 258 are each glycosylated (N-linked (GlcNAc...) asparagine). 3 N-linked (GlcNAc...) asparagine glycosylation sites follow: asparagine 314, asparagine 319, and asparagine 343. Asparagine 385, asparagine 390, and asparagine 397 each carry an N-linked (GlcNAc...) asparagine glycan. A helical transmembrane segment spans residues 437–457; that stretch reads IGLGLAISMAFLLIGLLLILV. Residues 458 to 785 are Cytoplasmic-facing; sequence ALRVRRKSRT…GLLKDISPNY (328 aa). A phosphothreonine mark is found at threonine 510 and threonine 518. The 265-residue stretch at 521–785 folds into the Protein kinase domain; sequence FDRGTMLWEG…GLLKDISPNY (265 aa). ATP contacts are provided by residues 527 to 535 and lysine 549; that span reads LWEGKSGPT. Phosphotyrosine is present on residues tyrosine 594 and tyrosine 683.

The protein belongs to the protein kinase superfamily. Ser/Thr protein kinase family.

It localises to the cell membrane. The sequence is that of Probably inactive leucine-rich repeat receptor-like protein kinase At5g58150 from Arabidopsis thaliana (Mouse-ear cress).